We begin with the raw amino-acid sequence, 344 residues long: Laforin, isoform 9 (344 aa).

Disordered regions lie at residues 1–44, 58–134, 158–188, and 320–344; these read MHPK…PGPG, GGGA…PRGH, PAPGAERELRPAPPTGASASGRPRRPRRRAS, and SLKKTQNDPTNETSVFANPRQQCAT. Residues 77 to 88 are compositionally biased toward low complexity; sequence AARAGALGAARC. Gly residues predominate over residues 101 to 131; it reads RGPGPAGAGPVARGGGAGGRGGGAGRGGAGP. A compositionally biased stretch (basic residues) spans 179–188; the sequence is RPRRPRRRAS.

In terms of assembly, interacts with isoform 1 and isoform 2.

It localises to the nucleus. This Homo sapiens (Human) protein is Laforin, isoform 9.